Consider the following 4516-residue polypeptide: Dynein axonemal heavy chain 1 (4516 aa).

The segment at 1 to 1748 (MVTLSISDTL…YIRAVNAEFI (1748 aa)) is stem. A disordered region spans residues 78–160 (SSGSDKSLKN…RKSPLAGTDK (83 aa)). Composition is skewed to basic and acidic residues over residues 83 to 97 (KSLK…KEEA) and 113 to 129 (ENHD…RNPE). AAA regions lie at residues 1749–1956 (YGYE…VISA), 2016–2249 (QAIR…TTVK), 2422–2682 (TMMP…VFQG), and 2780–2972 (DYNQ…CCTI). Positions 1787–1794 (GPAGTGKT) match the GPAGTGKT motif motif. Residue 1787 to 1794 (GPAGTGKT) participates in ATP binding. The CFDEFNR motif motif lies at 1837–1843 (CFDEFNR). Residues 2054–2061 (GPTGSGKS), 2460–2467 (GPTGTGKT), and 2819–2826 (GVGGSGRS) each bind ATP. Positions 2987-3285 (ATRFLHEIPE…MHKYHFVAKA (299 aa)) are stalk. A coiled-coil region spans residues 3293 to 3394 (LREAQDDLEV…QDTVENLENM (102 aa)). AAA regions lie at residues 3388–3618 (VENL…EERP) and 3831–4050 (LPAF…SYNS).

The protein belongs to the dynein heavy chain family. Consists of at least two heavy chains and a number of intermediate and light chains. Expressed in brain.

Its subcellular location is the cytoplasm. It localises to the cytoskeleton. The protein resides in the cilium axoneme. The protein localises to the cell projection. It is found in the cilium. Its subcellular location is the flagellum. Its function is as follows. Force generating protein of cilia required for sperm flagellum motility. Produces force towards the minus ends of microtubules. Dynein has ATPase activity; the force-producing power stroke is thought to occur on release of ADP. Required in spermatozoa for the formation of the inner dynein arms and biogenesis of the axoneme. This chain is Dynein axonemal heavy chain 1, found in Rattus norvegicus (Rat).